A 458-amino-acid chain; its full sequence is uncharacterized protein (458 aa).

This is an uncharacterized protein from Bacillus subtilis (strain 168).